The chain runs to 231 residues: uncharacterized protein (231 aa).

Helical transmembrane passes span 26 to 46 (TYSWMAAGLALTAGVAYLTAQ), 56 to 76 (SLRLPLMLAQLALVFVLSMFA), 84 to 104 (AGALFVGYAALTGLTFSALLF), 112 to 132 (ITAFAVSAGTFGLMSVAGFVI), 142 to 162 (FFLFAVLGLVVAMLVNLFVGS), 163 to 183 (SALSLGISMIGVFLFAGLTAY), and 206 to 226 (INGALALYLDFINIFLFLLNI).

The protein belongs to the BI1 family.

The protein localises to the cell membrane. This is an uncharacterized protein from Deinococcus radiodurans (strain ATCC 13939 / DSM 20539 / JCM 16871 / CCUG 27074 / LMG 4051 / NBRC 15346 / NCIMB 9279 / VKM B-1422 / R1).